The primary structure comprises 583 residues: Ankyrin repeat and SOCS box protein 15 (583 aa).

ANK repeat units follow at residues 75-104 (KGWF…KTLW), 110-139 (DGET…WPNT), 143-172 (KGET…SLDQ), 176-205 (KRWS…NVHL), 209-238 (FGVT…DVFA), 242-271 (DGAS…SGNV), 275-304 (AGHL…KHAI), 307-336 (SGLT…DVNA), 349-378 (ERKT…DPNL), 379-408 (DPLN…NVNC), and 416-444 (TRFP…QVEL). Positions 524–579 (WPEIRQIIENPCSLKHLCRLKIRRVMGLQRLCQPASIQMLPLPAAMRRYLLFKEFD) constitute an SOCS box domain.

The protein belongs to the ankyrin SOCS box (ASB) family.

It functions in the pathway protein modification; protein ubiquitination. Functionally, may be a substrate-recognition component of a SCF-like ECS (Elongin-Cullin-SOCS-box protein) E3 ubiquitin-protein ligase complex which mediates the ubiquitination and subsequent proteasomal degradation of target proteins. This chain is Ankyrin repeat and SOCS box protein 15 (Asb15), found in Mus musculus (Mouse).